The following is a 335-amino-acid chain: MTEIHDFDKSEWDIKGSIAPIQPTTYSDGRLVPQVRVTDPGLGDRKDECFMYMFLLGVVEDSDPLGPPIGRAFGSLPLGVGRSTAKPEELLKEATELDIVVRRIAGLNEKLVFYNNPPLTLLTPWRKVLTTGSVFNANQVCNAVNLIPLDTPQRFRVVYMSITRLSDNGYYTVPRRMLEFKSVNAVAFKLLVTLRIHKAIGPGKIIDNAEQLPEATFMVHIGNFRRKKSEVYSADYCKMKIEKMGLVFALGGIGGTSLHIRSTGKMNKTLHAQLGFKKTLCYPLMDINEDPNRLLWRSRCKTIRIQAVLQPSVPQEFRIYDDVIINDDQGLFKVL.

The protein belongs to the morbillivirus/respirovirus/rubulavirus M protein family. In terms of assembly, homodimer. Dimerization is critical for virion formation. Interacts with host ANP32B.

It is found in the virion. The protein resides in the host cell membrane. The M protein has a crucial role in virus assembly and interacts with the RNP complex as well as with the viral membrane. Associates with phosphatidylserine (PS) and phosphatidylinositol 4,5-bisphosphate (PIP2) at the plasma membrane. Interaction with PIP2 triggers matrix protein lattice polymerization. Matrix proteins induce host membrane deformation and curvature necessary for virion assembly/budding. The polypeptide is Matrix protein (M) (Measles virus (strain IP-3-Ca) (MeV)).